The chain runs to 145 residues: Basic phospholipase A2 beta-bungarotoxin A2 chain (145 aa).

A signal peptide spans 1–17; the sequence is MLIFLWCGAVCVSLLGA. The propeptide occupies 18–25; it reads ANIPPHPL. 6 disulfide bridges follow: Cys52–Cys144, Cys54–Cys70, Cys69–Cys125, Cys76–Cys118, Cys86–Cys111, and Cys104–Cys116. 3 residues coordinate Ca(2+): Tyr53, Gly55, and Gly57. His73 is an active-site residue. A Ca(2+)-binding site is contributed by Asp74. Asp119 is a catalytic residue.

It belongs to the phospholipase A2 family. Group I subfamily. D49 sub-subfamily. Heterodimer; disulfide-linked. The A chains have phospholipase A2 activity and the B chains show homology with the basic protease inhibitors. The A2 chain is found in beta-3 and beta-4 bungarotoxins. The cofactor is Ca(2+). As to expression, expressed by the venom gland.

The protein resides in the secreted. The catalysed reaction is a 1,2-diacyl-sn-glycero-3-phosphocholine + H2O = a 1-acyl-sn-glycero-3-phosphocholine + a fatty acid + H(+). Functionally, snake venom phospholipase A2 (PLA2) that inhibits neuromuscular transmission by blocking acetylcholine release from the nerve termini. PLA2 catalyzes the calcium-dependent hydrolysis of the 2-acyl groups in 3-sn-phosphoglycerides. In Bungarus multicinctus (Many-banded krait), this protein is Basic phospholipase A2 beta-bungarotoxin A2 chain.